The sequence spans 391 residues: DNA primase small subunit PriS (391 aa).

Active-site residues include aspartate 98, aspartate 100, and aspartate 294.

Belongs to the eukaryotic-type primase small subunit family. Heterodimer of a small subunit (PriS) and a large subunit (PriL). Requires Mg(2+) as cofactor. Mn(2+) is required as a cofactor.

In terms of biological role, catalytic subunit of DNA primase, an RNA polymerase that catalyzes the synthesis of short RNA molecules used as primers for DNA polymerase during DNA replication. The small subunit contains the primase catalytic core and has DNA synthesis activity on its own. Binding to the large subunit stabilizes and modulates the activity, increasing the rate of DNA synthesis while decreasing the length of the DNA fragments, and conferring RNA synthesis capability. The DNA polymerase activity may enable DNA primase to also catalyze primer extension after primer synthesis. May also play a role in DNA repair. In Halobacterium salinarum (strain ATCC 29341 / DSM 671 / R1), this protein is DNA primase small subunit PriS.